The chain runs to 68 residues: Small ribosomal subunit protein bS21 (68 aa).

Positions 35–68 (HYEKPSEKRARERAAAVRRARKMERKRMERDGIK) are disordered. The span at 37 to 49 (EKPSEKRARERAA) shows a compositional bias: basic and acidic residues. A compositionally biased stretch (basic residues) spans 50–59 (AVRRARKMER).

It belongs to the bacterial ribosomal protein bS21 family.

The protein is Small ribosomal subunit protein bS21 of Sphingopyxis alaskensis (strain DSM 13593 / LMG 18877 / RB2256) (Sphingomonas alaskensis).